A 128-amino-acid polypeptide reads, in one-letter code: Cytochrome b (128 aa).

The next 3 helical transmembrane spans lie at 25–45 (FGSM…FLAI), 69–90 (WIMQ…YIHI), and 105–125 (WLSG…XMCY). His75 and His89 together coordinate heme b. His126 serves as a coordination point for a ubiquinone.

This sequence belongs to the cytochrome b family. The cytochrome bc1 complex contains 3 respiratory subunits (MT-CYB, CYC1 and UQCRFS1), 2 core proteins (UQCRC1 and UQCRC2) and probably 6 low-molecular weight proteins. Heme b is required as a cofactor.

Its subcellular location is the mitochondrion inner membrane. Functionally, component of the ubiquinol-cytochrome c reductase complex (complex III or cytochrome b-c1 complex) that is part of the mitochondrial respiratory chain. The b-c1 complex mediates electron transfer from ubiquinol to cytochrome c. Contributes to the generation of a proton gradient across the mitochondrial membrane that is then used for ATP synthesis. The protein is Cytochrome b (MT-CYB) of Crotalus viridis viridis (Prairie rattlesnake).